The primary structure comprises 1913 residues: Protein TIC 214 (1913 aa).

5 helical membrane passes run 18–38 (IINS…FSIG), 64–84 (FITG…HLAL), 124–144 (LSIQ…HLML), 172–192 (VGWL…VSWI), and 214–234 (LKSA…VNYL). 3 disordered regions span residues 245–330 (KLNE…ETEE), 707–734 (YTDK…NSDT), and 1605–1652 (EKED…RKKK). Residues 260 to 289 (KESQKSKESEEERDVEKETTSETKETKQEQ) are compositionally biased toward basic and acidic residues. Residues 303 to 314 (EKEDPDKIDETE) are compositionally biased toward acidic residues. A compositionally biased stretch (basic and acidic residues) spans 315-330 (EIRVNGKEKKKDETEE). Residues 718 to 729 (PNPNTDNTTTEN) are compositionally biased toward low complexity.

The protein belongs to the TIC214 family. In terms of assembly, part of the Tic complex.

The protein resides in the plastid. Its subcellular location is the chloroplast inner membrane. Its function is as follows. Involved in protein precursor import into chloroplasts. May be part of an intermediate translocation complex acting as a protein-conducting channel at the inner envelope. This chain is Protein TIC 214, found in Acorus calamus var. americanus (American sweet flag).